A 165-amino-acid chain; its full sequence is Disulfide bond formation protein B (165 aa).

Residues 1-16 (MTILNSLNQFSKGRLS) lie on the Cytoplasmic side of the membrane. A helical transmembrane segment spans residues 17–33 (WLLLLLFVVFFEACALY). At 34–51 (FQHVMMLAPCVMCIYERV) the chain is on the periplasmic side. Cys43 and Cys46 are disulfide-bonded. The helical transmembrane segment at 52–67 (AMMGVGVAAIVGLMAP) threads the bilayer. Topologically, residues 68–74 (NNPIFRW) are cytoplasmic. The helical transmembrane segment at 75–92 (LGLIGWGLSSYKGLLLAQ) threads the bilayer. The Periplasmic portion of the chain corresponds to 93-147 (QHVDYQFNPSPFATCDLFVTFPSWRPLNQWAPWIFEAYGDCSKIVWQFLDLSMPQ). A disulfide bond links Cys107 and Cys133. Residues 148–165 (WLVVIFAGNLIALALIVI) traverse the membrane as a helical segment.

The protein belongs to the DsbB family.

The protein localises to the cell inner membrane. In terms of biological role, required for disulfide bond formation in some periplasmic proteins. Acts by oxidizing the DsbA protein. This is Disulfide bond formation protein B from Vibrio alginolyticus.